We begin with the raw amino-acid sequence, 221 residues long: MAIVYAVVARGTVVLAEFSAVTGNTGAVVRRILEKLSPEISDERLCFSQDRYIFHILRSDGLTFLCMANDTFGRRVPFSYLEEIHMRFMKNYGKVAHNAPAYAMNDEFSRVLHQQMEFFSSNPSVDTLNRVRGEVSEIRSVMVENIEKIMERGDRIELLVDKTATMQDSSFHFRKQSKRLRRALWMKNAKLLVLLTCLIVFLLYIIIASFCGGITLPSCRS.

A2 carries the post-translational modification N-acetylalanine. Topologically, residues 2 to 190 (AIVYAVVARG…RRALWMKNAK (189 aa)) are cytoplasmic. The Longin domain maps to 7–112 (VVARGTVVLA…AMNDEFSRVL (106 aa)). The region spanning 127–187 (TLNRVRGEVS…KRLRRALWMK (61 aa)) is the v-SNARE coiled-coil homology domain. The chain crosses the membrane as a helical; Anchor for type IV membrane protein span at residues 191-211 (LLVLLTCLIVFLLYIIIASFC). Topologically, residues 212–221 (GGITLPSCRS) are vesicular.

The protein belongs to the synaptobrevin family. In terms of tissue distribution, highly expressed in leaves, stems and roots. Detected in flowers.

The protein localises to the golgi apparatus membrane. Functionally, involved in the targeting and/or fusion of transport vesicles to their target membrane. This chain is Vesicle-associated membrane protein 714, found in Arabidopsis thaliana (Mouse-ear cress).